The primary structure comprises 732 residues: Acylamino-acid-releasing enzyme (732 aa).

Position 1 is an N-acetylmethionine (Met-1). Ser-185 and Ser-187 each carry phosphoserine. Catalysis depends on charge relay system residues Ser-587, Asp-675, and His-707.

In terms of assembly, homotetramer. As to expression, expressed in erythrocytes (at protein level).

Its subcellular location is the cytoplasm. The catalysed reaction is Cleavage of an N-acetyl or N-formyl amino acid from the N-terminus of a polypeptide.. Its activity is regulated as follows. Homotetramerization is required for activity. Tetramerization results in the formation of a gated channel which is involved in substrate selection and substrate access to the catalytic sites. Its function is as follows. This enzyme catalyzes the hydrolysis of the N-terminal peptide bond of an N-acetylated peptide to generate an N-acetylated amino acid and a peptide with a free N-terminus. It preferentially cleaves off Ac-Ala, Ac-Met and Ac-Ser. Also, involved in the degradation of oxidized and glycated proteins. In Homo sapiens (Human), this protein is Acylamino-acid-releasing enzyme (APEH).